The primary structure comprises 2110 residues: Tenascin (2110 aa).

The signal sequence occupies residues 1-22 (MGAVTWLLPGIFLALFALTPEG). Asn-38 carries N-linked (GlcNAc...) asparagine glycosylation. Residues Ser-65, Ser-70, and Ser-72 each carry the phosphoserine modification. A disordered region spans residues 69–91 (ESASGEKDLTPTPESSGSFQEHT). An O-linked (Xyl...) (chondroitin sulfate) serine glycan is attached at Ser-72. Positions 80–89 (TPESSGSFQE) are enriched in polar residues. A coiled-coil region spans residues 118–142 (DVKELLSRLEELELLVSSLREQCTM). 2 N-linked (GlcNAc...) asparagine glycosylation sites follow: Asn-166 and Asn-184. The region spanning 174–185 (CVCEPGWKGPNC) is the EGF-like 1; incomplete domain. 14 EGF-like domains span residues 186–216 (SEPDCPGNCNLRGQCLDGQCICDEGFTGEDC), 217–247 (SQLACPNDCNDQGRCVNGVCVCFEGYAGPDC), 248–279 (GLEVCPVPCSEEHGMCVDGRCVCKDGFAGEDC), 280–310 (NEPLCLNNCYNRGRCVENECVCDEGFTGEDC), 311–341 (SELICPNDCFDRGRCINGTCYCEEGFTGEDC), 342–372 (GELTCPNDCQGRGQCEEGQCVCNEGFAGADC), 373–403 (SEKRCPADCHHRGRCLNGQCECDDGFTGADC), 404–434 (GDLQCPNGCSGHGRCVNGQCVCDEGYTGEDC), 435–465 (SQRRCPNDCHNRGLCVQGKCICEQGFKGFDC), 466–496 (SEMSCPNDCHQHGRCVNGMCICDDDYTGEDC), 497–527 (RDRRCPRDCSQRGRCVDGQCICEDGFTGPDC), 528–558 (AELSCPSDCHGHGRCVNGQCICHEGFTGKDC), 559–589 (KEQRCPSDCHGQGRCEDGQCICHEGFTGLDC), and 590–621 (GQRSCPNDCSNQGQCVSGRCICNEGYTGIDCS). 42 cysteine pairs are disulfide-bonded: Cys-190–Cys-200, Cys-194–Cys-205, Cys-207–Cys-216, Cys-221–Cys-231, Cys-225–Cys-236, Cys-238–Cys-247, Cys-252–Cys-263, Cys-256–Cys-268, Cys-270–Cys-279, Cys-284–Cys-294, Cys-288–Cys-299, Cys-301–Cys-310, Cys-315–Cys-325, Cys-319–Cys-330, Cys-332–Cys-341, Cys-346–Cys-356, Cys-350–Cys-361, Cys-363–Cys-372, Cys-377–Cys-387, Cys-381–Cys-392, Cys-394–Cys-403, Cys-408–Cys-418, Cys-412–Cys-423, Cys-425–Cys-434, Cys-439–Cys-449, Cys-443–Cys-454, Cys-456–Cys-465, Cys-470–Cys-480, Cys-474–Cys-485, Cys-487–Cys-496, Cys-501–Cys-511, Cys-505–Cys-516, Cys-518–Cys-527, Cys-532–Cys-542, Cys-536–Cys-547, Cys-549–Cys-558, Cys-563–Cys-573, Cys-567–Cys-578, Cys-580–Cys-589, Cys-594–Cys-604, Cys-598–Cys-609, and Cys-611–Cys-620. Asn-327 carries N-linked (GlcNAc...) asparagine glycosylation. 14 consecutive Fibronectin type-III domains span residues 625–715 (PPKD…LPAP), 716–804 (EGLK…TRLD), 805–894 (APSH…TGLD), 895–988 (APRN…IDAP), 989–1077 (KDLR…VPSL), 1078–1165 (ENLT…TGTT), 1167–1259 (NLGE…LPQL), 1260–1348 (GGLS…AREP), 1349–1440 (EIGN…ALPL), 1442–1530 (ENLT…EAEP), 1531–1620 (EVDN…TAMG), 1621–1710 (SPKE…ALDG), 1711–1797 (PSGL…TDLD), and 1798–1886 (SPRE…IGLL). A glycan (N-linked (GlcNAc...) asparagine) is linked at Asn-788. A Phosphothreonine modification is found at Thr-905. N-linked (GlcNAc...) asparagine glycans are attached at residues Asn-1018, Asn-1079, Asn-1093, Asn-1119, Asn-1184, Asn-1210, Asn-1275, Asn-1301, Asn-1354, Asn-1364, Asn-1394, and Asn-1443. N-linked (GlcNAc...) asparagine glycosylation is present at Asn-1718. The Fibrinogen C-terminal domain occupies 1884–2099 (GLLYPFPRDC…FAEMKLRPSN (216 aa)). Asn-1969 and Asn-2071 each carry an N-linked (GlcNAc...) asparagine glycan.

Belongs to the tenascin family. As to quaternary structure, homohexamer; disulfide-linked. A homotrimer may be formed in the triple coiled-coil region and may be stabilized by disulfide rings at both ends. Two of such half-hexabrachions may be disulfide linked within the central globule. Interacts with CSPG4. Interacts (via the 3rd fibronectin type-III domain) with integrin ITGA9:ITGB1. In terms of processing, N-glycosylated. Expressed in the corneal limbus, the periosteum and the rib molecular layer of the cerebellum, the matrix of kidney tubules, blood vessels, stomach and intestine (at protein level). As to expression, weakly expressed in the brain. In terms of tissue distribution, highly expressed in the thymus and moderately expressed in the brain.

It is found in the secreted. It localises to the extracellular space. The protein localises to the extracellular matrix. Functionally, extracellular matrix protein implicated in guidance of migrating neurons as well as axons during development, synaptic plasticity as well as neuronal regeneration. Promotes neurite outgrowth when provided to neurons in culture. May play a role in supporting the growth of epithelial tumors. Ligand for integrins ITGA8:ITGB1, ITGA9:ITGB1, ITGAV:ITGB3 and ITGAV:ITGB6. In tumors, stimulates angiogenesis by elongation, migration and sprouting of endothelial cells. The protein is Tenascin of Mus musculus (Mouse).